The primary structure comprises 438 residues: Adenosylhomocysteinase (438 aa).

Residues Thr-64, Asp-139, and Glu-164 each coordinate substrate. 165–167 lines the NAD(+) pocket; it reads TTT. 2 residues coordinate substrate: Lys-194 and Asp-198. Residues Asn-199, 228–233, Glu-251, Asn-286, 307–309, and Asn-352 each bind NAD(+); these read GYGDVG and IGH.

The protein belongs to the adenosylhomocysteinase family. The cofactor is NAD(+).

The protein localises to the cytoplasm. The enzyme catalyses S-adenosyl-L-homocysteine + H2O = L-homocysteine + adenosine. The protein operates within amino-acid biosynthesis; L-homocysteine biosynthesis; L-homocysteine from S-adenosyl-L-homocysteine: step 1/1. Functionally, may play a key role in the regulation of the intracellular concentration of adenosylhomocysteine. The polypeptide is Adenosylhomocysteinase (Coxiella burnetii (strain Dugway 5J108-111)).